The following is a 134-amino-acid chain: Small ribosomal subunit protein uS11 (134 aa).

Positions 1–24 (MATKMAGVKRAGRKRKERKNIERG) are disordered.

This sequence belongs to the universal ribosomal protein uS11 family. Part of the 30S ribosomal subunit. Interacts with proteins S7 and S18. Binds to IF-3.

Its function is as follows. Located on the platform of the 30S subunit, it bridges several disparate RNA helices of the 16S rRNA. Forms part of the Shine-Dalgarno cleft in the 70S ribosome. This Acetivibrio thermocellus (strain ATCC 27405 / DSM 1237 / JCM 9322 / NBRC 103400 / NCIMB 10682 / NRRL B-4536 / VPI 7372) (Clostridium thermocellum) protein is Small ribosomal subunit protein uS11.